A 273-amino-acid chain; its full sequence is Dermonecrotic toxin LdSicTox-alphaIB1aiv (273 aa).

Residue H5 is part of the active site. The Mg(2+) site is built by E25 and D27. Residue H41 is the Nucleophile of the active site. Intrachain disulfides connect C45–C51 and C47–C190. D85 contacts Mg(2+). N250 is a glycosylation site (N-linked (GlcNAc...) asparagine).

The protein belongs to the arthropod phospholipase D family. Class II subfamily. It depends on Mg(2+) as a cofactor. Expressed by the venom gland.

The protein localises to the secreted. It catalyses the reaction an N-(acyl)-sphingosylphosphocholine = an N-(acyl)-sphingosyl-1,3-cyclic phosphate + choline. The enzyme catalyses an N-(acyl)-sphingosylphosphoethanolamine = an N-(acyl)-sphingosyl-1,3-cyclic phosphate + ethanolamine. It carries out the reaction a 1-acyl-sn-glycero-3-phosphocholine = a 1-acyl-sn-glycero-2,3-cyclic phosphate + choline. The catalysed reaction is a 1-acyl-sn-glycero-3-phosphoethanolamine = a 1-acyl-sn-glycero-2,3-cyclic phosphate + ethanolamine. Dermonecrotic toxins cleave the phosphodiester linkage between the phosphate and headgroup of certain phospholipids (sphingolipid and lysolipid substrates), forming an alcohol (often choline) and a cyclic phosphate. This toxin acts on sphingomyelin (SM). It may also act on ceramide phosphoethanolamine (CPE), lysophosphatidylcholine (LPC) and lysophosphatidylethanolamine (LPE), but not on lysophosphatidylserine (LPS), and lysophosphatidylglycerol (LPG). It acts by transphosphatidylation, releasing exclusively cyclic phosphate products as second products. Induces dermonecrosis, hemolysis, increased vascular permeability, edema, inflammatory response, and platelet aggregation. In Loxosceles deserta (Desert recluse spider), this protein is Dermonecrotic toxin LdSicTox-alphaIB1aiv.